The following is a 551-amino-acid chain: E3 SUMO-protein ligase CBX4 (551 aa).

Residues 11–69 form the Chromo domain; sequence FAVESIEKKRIRKGRVEYLVKWRGWSPKYNTWEPEENILDPRLLIAFQNRERQEQLMGY. Glycyl lysine isopeptide (Lys-Gly) (interchain with G-Cter in SUMO2) cross-links involve residues K77, K106, K114, and K125. The tract at residues 125–152 is disordered; sequence KKHHQYQPHSKERSGKPPPPGKSGKYYY. N6-acetyllysine; alternate is present on K149. K149 is covalently cross-linked (Glycyl lysine isopeptide (Lys-Gly) (interchain with G-Cter in SUMO2); alternate). Residues K157, K167, and K178 each participate in a glycyl lysine isopeptide (Lys-Gly) (interchain with G-Cter in SUMO2) cross-link. The interval 172-193 is disordered; the sequence is QYQGGHKEAPSPTCPDLGTKSH. S182 carries the phosphoserine modification. Glycyl lysine isopeptide (Lys-Gly) (interchain with G-Cter in SUMO2) cross-links involve residues K191, K205, K212, K223, K249, K268, K278, and K280. Residues 216-244 are disordered; it reads GGAGAPGKGSEKGPPNGMTPAPKEAVTGN. 3 stretches are compositionally biased toward basic and acidic residues: residues 281-291, 298-310, and 317-332; these read SGEAAEGEARS, AAEE…DRTF, and SEEK…REEE. Disordered stretches follow at residues 281–399 and 430–451; these read SGEA…TVGL and TPTC…PTAA. Residues K321, K353, and K366 each participate in a glycyl lysine isopeptide (Lys-Gly) (interchain with G-Cter in SUMO2) cross-link. The segment covering 381 to 396 has biased composition (basic residues); the sequence is PAHHHHHHHHHHHHHT. A Phosphoserine modification is found at S463. Residue K490 forms a Glycyl lysine isopeptide (Lys-Gly) (interchain with G-Cter in SUMO2); alternate linkage. A Glycyl lysine isopeptide (Lys-Gly) (interchain with G-Cter in SUMO); alternate cross-link involves residue K490.

Interacts with SUV39H1 and HIPK2. Interacts with CSNK2B. Component of a PRC1-like complex. The composition of the PRC1 complex differs between the PRC1 complex in pluripotent embryonic stem cells containing RNF2, CBX7 and PCGF2, and the PRC1 complex in differentiating cells containing RNF2, CBX2, CBX4 and BMI1. Interacts with RNF2. Interacts (via chromodomain) with histone H3K9Me3 and single-stranded RNA (ssRNA). Interacts with CHTOP. May interact with H3C15 and H3C1. Interacts with PRDM1. Ubiquitinated. Ubiquitination regulates the function of the Polycomb group (PcG) multiprotein PRC1-like complex. Deubiquitinated by USP26. As to expression, expressed in embryoid bodies.

It is found in the nucleus. The protein localises to the nucleus speckle. Its pathway is protein modification; protein sumoylation. Functionally, E3 SUMO-protein ligase that catalyzes sumoylation of target proteins by promoting the transfer of SUMO from the E2 enzyme to the substrate. Involved in the sumoylation of HNRNPK, a p53/TP53 transcriptional coactivator, hence indirectly regulates p53/TP53 transcriptional activation resulting in p21/CDKN1A expression. In terms of biological role, component of a Polycomb group (PcG) multiprotein PRC1-like complex, a complex class required to maintain the transcriptionally repressive state of many genes, including Hox genes, throughout development. PcG PRC1 complex acts via chromatin remodeling and modification of histones; it mediates monoubiquitination of histone H2A 'Lys-119', rendering chromatin heritably changed in its expressibility. Binds to histone H3 trimethylated at 'Lys-9' (H3K9me3). Plays a role in the lineage differentiation of the germ layers in embryonic development. This Mus musculus (Mouse) protein is E3 SUMO-protein ligase CBX4 (Cbx4).